The primary structure comprises 411 residues: Arginase (411 aa).

The segment at 83–106 (NNYINNNDNNNDNNNDNNNDNNNN) is disordered. 4 residues coordinate Mn(2+): His193, Asp216, His218, and Asp220. The L-arginine site is built by Asn222, Ser229, and Asp274. Positions 323 and 325 each coordinate Mn(2+).

This sequence belongs to the arginase family. As to quaternary structure, homotrimer; oligomerization is dependent on Mn(2+) binding. Requires Mn(2+) as cofactor.

It carries out the reaction L-arginine + H2O = urea + L-ornithine. It functions in the pathway nitrogen metabolism; urea cycle; L-ornithine and urea from L-arginine: step 1/1. With respect to regulation, feedback inhibition by product L-ornithine,. Inhibited by 2(S)-amino-6-boronohexanoic acid (ABH); however, with less efficiency than human ARG1. Functionally, catalyzes the hydrolysis of L-arginine into urea and L-ornithine, which is a precursor for polyamine biosynthesis. May play a role in parasite intra-hepatic development during the host liver stage. This Plasmodium falciparum (isolate 3D7) protein is Arginase.